Here is a 211-residue protein sequence, read N- to C-terminus: Endonuclease V (211 aa).

2 residues coordinate Mg(2+): Asp-31 and Glu-95. A disordered region spans residues 182–211 (IYEVKNTPSPNRSRKKRGNRGKDNNNSQGN).

This sequence belongs to the endonuclease V family. Mg(2+) serves as cofactor.

It is found in the cytoplasm. It catalyses the reaction Endonucleolytic cleavage at apurinic or apyrimidinic sites to products with a 5'-phosphate.. Its function is as follows. DNA repair enzyme involved in the repair of deaminated bases. Selectively cleaves double-stranded DNA at the second phosphodiester bond 3' to a deoxyinosine leaving behind the intact lesion on the nicked DNA. The sequence is that of Endonuclease V from Pyrococcus horikoshii (strain ATCC 700860 / DSM 12428 / JCM 9974 / NBRC 100139 / OT-3).